A 211-amino-acid polypeptide reads, in one-letter code: Uracil phosphoribosyltransferase (211 aa).

Residues Arg78, Arg103, and 130 to 138 contribute to the 5-phospho-alpha-D-ribose 1-diphosphate site; that span reads DPMLATGGT. Uracil-binding positions include Ile195 and 200–202; that span reads GDA. Asp201 is a binding site for 5-phospho-alpha-D-ribose 1-diphosphate.

The protein belongs to the UPRTase family. It depends on Mg(2+) as a cofactor.

The enzyme catalyses UMP + diphosphate = 5-phospho-alpha-D-ribose 1-diphosphate + uracil. Its pathway is pyrimidine metabolism; UMP biosynthesis via salvage pathway; UMP from uracil: step 1/1. Its activity is regulated as follows. Allosterically activated by GTP. Catalyzes the conversion of uracil and 5-phospho-alpha-D-ribose 1-diphosphate (PRPP) to UMP and diphosphate. In Arthrobacter sp. (strain FB24), this protein is Uracil phosphoribosyltransferase.